The sequence spans 419 residues: MQLSLSALTTVALALTSSLVDAKAHSIKLSKLSNEETLDASNFQEYTNSLANKYLNLFNTAHGNPSNFGLQHVLTNQEAEVPFVTPKKGGKYDAPLTNYLNAQYFTEIQIGTPGQPFKVILDTGSSNLWVPSQDCTSLACFLHAKYDHDASSTYKVNGSEFSIQYGSGSMEGYISQDVLTIGDLVIPGQDFAEATSEPGLAFAFGKFDGILGLAYDTISVNHIVPPIYNAINQGLLEKPQFGFYLGSTDKDENDGGLATFGGYDASLFQGKITWLPIRRKAYWEVSFEGIGLGDEYAELHKTGAAIDTGTSLITLPSSLAEIINAKIGATKSWSGQYQVDCAKRDSLPDLTLTFAGYNFTLTPYDYILEVSGSCISVFTPMDFPQPIGDLAIVGDAFLRKYYSIYDLDKNAVGLAPTKV.

Residues 1–22 (MQLSLSALTTVALALTSSLVDA) form the signal peptide. The Peptidase A1 domain occupies 104-415 (YFTEIQIGTP…DLDKNAVGLA (312 aa)). Asp122 is an active-site residue. Cysteines 135 and 140 form a disulfide. Asn157 is a glycosylation site (N-linked (GlcNAc...) asparagine). Asp307 is a catalytic residue. Cys341 and Cys374 are joined by a disulfide. Asn358 carries N-linked (GlcNAc...) asparagine glycosylation. The Microbody targeting signal motif lies at 417–419 (TKV).

Belongs to the peptidase A1 family.

It is found in the vacuole. The chain is Vacuolar aspartic protease (APR1) from Candida albicans (Yeast).